Reading from the N-terminus, the 167-residue chain is Cyclic pyranopterin monophosphate synthase 2 (167 aa).

The segment at 1-23 (MARASGASDYRSGELSHQDERGA) is disordered. Over residues 11-23 (RSGELSHQDERGA) the composition is skewed to basic and acidic residues. Residues 86–88 (LCH) and 122–123 (ME) each bind substrate. Residue D137 is part of the active site.

The protein belongs to the MoaC family. As to quaternary structure, homohexamer; trimer of dimers.

It carries out the reaction (8S)-3',8-cyclo-7,8-dihydroguanosine 5'-triphosphate = cyclic pyranopterin phosphate + diphosphate. The protein operates within cofactor biosynthesis; molybdopterin biosynthesis. Catalyzes the conversion of (8S)-3',8-cyclo-7,8-dihydroguanosine 5'-triphosphate to cyclic pyranopterin monophosphate (cPMP). This chain is Cyclic pyranopterin monophosphate synthase 2 (moaC2), found in Mycobacterium bovis (strain ATCC BAA-935 / AF2122/97).